Reading from the N-terminus, the 1034-residue chain is Protein argonaute 2 (1034 aa).

The tract at residues M1–S201 is disordered. A compositionally biased stretch (gly residues) spans G18–G125. Low complexity predominate over residues V172–S187. Positions P391–E504 constitute a PAZ domain. Positions L688–E989 constitute a Piwi domain.

This sequence belongs to the argonaute family. Ago subfamily.

In terms of biological role, probably involved in the RNA silencing pathway. May bind to short RNAs such as microRNAs (miRNAs) or short interfering RNAs (siRNAs), and represses the translation of mRNAs which are complementary to them. This chain is Protein argonaute 2 (AGO2), found in Oryza sativa subsp. japonica (Rice).